Here is an 840-residue protein sequence, read N- to C-terminus: E3 ubiquitin-protein ligase SH3RF1 (840 aa).

An RING-type zinc finger spans residues 12 to 53; the sequence is CPVCLERLDASAKVLPCQHTFCKRCLLGIVGSRNELRCPECR. Positions 105–129 are disordered; sequence VTCSPKDGPSSQGGPQPRAQAWSPP. SH3 domains are found at residues 134 to 193 and 196 to 259; these read PQLP…IIKP and QPPP…FNSA. Disordered regions lie at residues 267–324, 394–442, 516–545, 578–633, 652–723, and 744–773; these read DQPP…RHSM, TLNP…PRPS, GPAS…VAGG, QARS…AASG, AASL…LGAE, and MAPG…SLGP. The span at 273–282 shows a compositional bias: low complexity; the sequence is GVAAGEGALA. Positions 283 to 292 are enriched in polar residues; it reads TTPSSTTTKQ. The interaction with RAC1 stretch occupies residues 292 to 362; it reads QPDGKKNTKK…APSQVHISTT (71 aa). Serine 304 is subject to Phosphoserine. Low complexity-rich tracts occupy residues 307-320 and 405-424; these read SLSM…AAQQ and QAAT…GPRP. The segment at 434 to 537 is interaction with AKT2; it reads HPRPQPRPSV…PSTGGPAQKP (104 aa). Residues 439 to 500 form the SH3 3 domain; that stretch reads PRPSVYVAIY…PGNYVAPVTR (62 aa). The segment covering 616 to 625 has biased composition (pro residues); that stretch reads SPQPPAPLGP. The span at 681-692 shows a compositional bias: basic and acidic residues; sequence RPDKDGKKEKKG. Serine 709 carries the phosphoserine modification. Residues 781-840 form the SH3 4 domain; it reads AVCERHRVVVSYPPQSEAELELKEGDIVFVHKKREDGWFKGTLQRNGKTGLFPGSFVENI.

The protein belongs to the SH3RF family. As to quaternary structure, interacts with RAC1; in a GTP-dependent manner. Interacts with MAP3K10/MLK2 and MAP3K11/MLK3. Interacts with MAPK8IP; this interaction leads to the PJAC complex (POSH-JIP or SH3RF1/MAPK8IP apoptotic complex) with a 1:1 ratio. Interacts with SIAH1. Interacts with HERP1. Probably part of a signaling complex that may contain SH3RF1, MAPK8IP, DLK1, MAP2K4/MKK4, MAP2K7/MKK7, MAPK8/JNK1, MAPK9/JNK2, AKT1 and AKT2. Found in a complex with RAC2, MAP3K7/TAK1, MAP2K7/MKK7, MAPK8IP1/JIP1, MAPK8/JNK1 and MAPK9/JNK2. Found in a complex with RAC1, MAP3K11/MLK3, MAP2K7/MKK7, MAPK8IP1/JIP1 and MAPK8/JNK1. Interacts with SH3RF2. In terms of processing, phosphorylated at Ser-304 by AKT1 and AKT2. When phosphorylated, it has reduced ability to bind Rac. Autoubiquitinated. Ubiquitinated by SH3RF2, leading to proteasome-mediated degradation.

It is found in the cytoplasm. The protein localises to the perinuclear region. It localises to the cell projection. Its subcellular location is the lamellipodium. The protein resides in the golgi apparatus. It is found in the trans-Golgi network. It catalyses the reaction S-ubiquitinyl-[E2 ubiquitin-conjugating enzyme]-L-cysteine + [acceptor protein]-L-lysine = [E2 ubiquitin-conjugating enzyme]-L-cysteine + N(6)-ubiquitinyl-[acceptor protein]-L-lysine.. It participates in protein modification; protein ubiquitination. In terms of biological role, has E3 ubiquitin-protein ligase activity. In the absence of an external substrate, it can catalyze self-ubiquitination. Stimulates ubiquitination of potassium channel KCNJ1, enhancing it's dynamin-dependent and clathrin-independent endocytosis. Acts as a scaffold protein that coordinates with MAPK8IP1/JIP1 in organizing different components of the JNK pathway, including RAC1 or RAC2, MAP3K11/MLK3 or MAP3K7/TAK1, MAP2K7/MKK7, MAPK8/JNK1 and/or MAPK9/JNK2 into a functional multiprotein complex to ensure the effective activation of the JNK signaling pathway. Regulates the differentiation of CD4(+) and CD8(+) T-cells and promotes T-helper 1 (Th1) cell differentiation. Regulates the activation of MAPK8/JNK1 and MAPK9/JNK2 in CD4(+) T-cells and the activation of MAPK8/JNK1 in CD8(+) T-cells. Plays a crucial role in the migration of neocortical neurons in the developing brain. Controls proper cortical neuronal migration and the formation of proximal cytoplasmic dilation in the leading process (PCDLP) in migratory neocortical neurons by regulating the proper localization of activated RAC1 and F-actin assembly. In Bos taurus (Bovine), this protein is E3 ubiquitin-protein ligase SH3RF1 (SH3RF1).